The chain runs to 178 residues: MTMYGGHIHLIIGPMFAGKSTELIRLVRRYQIAKHKCLVVKYEKDIRYGNGVCTHDNMSITAVCTPSLDKIDSVAENAEVIGIDEGQFFPNIATFCERMANAGKVLIVAALDGTFQRKPFSNISELIPLAENVTKLNAVCMYCYKNGSFSKRLGDKMEIEVIGGSDKYKSVCRKCYFF.

13–20 contacts ATP; that stretch reads GPMFAGKS. The active-site Proton acceptor is the E85. F115 serves as a coordination point for substrate. C140 and C143 together coordinate Zn(2+). A substrate-binding site is contributed by 159 to 163; the sequence is IEVIG. Zn(2+) contacts are provided by C172 and C175.

This sequence belongs to the thymidine kinase family.

It catalyses the reaction thymidine + ATP = dTMP + ADP + H(+). The sequence is that of Thymidine kinase (TK) from Oryctolagus cuniculus (Rabbit).